Reading from the N-terminus, the 84-residue chain is DNA-directed RNA polymerase subunit Rpo5 (84 aa).

This sequence belongs to the archaeal Rpo5/eukaryotic RPB5 RNA polymerase subunit family. As to quaternary structure, part of the 13-subunit RNA polymerase complex.

The protein localises to the cytoplasm. The enzyme catalyses RNA(n) + a ribonucleoside 5'-triphosphate = RNA(n+1) + diphosphate. In terms of biological role, DNA-dependent RNA polymerase (RNAP) catalyzes the transcription of DNA into RNA using the four ribonucleoside triphosphates as substrates. The protein is DNA-directed RNA polymerase subunit Rpo5 of Saccharolobus solfataricus (strain ATCC 35092 / DSM 1617 / JCM 11322 / P2) (Sulfolobus solfataricus).